The following is a 1144-amino-acid chain: PAN2-PAN3 deadenylation complex catalytic subunit PAN2 (1144 aa).

WD repeat units lie at residues K27–H66, S153–S193, G196–D233, and H302–T341. The segment at A344–I481 is linker. The 406-residue stretch at D482 to A887 folds into the USP domain. The 172-residue stretch at V939–Y1110 folds into the Exonuclease domain. D942, E944, D1051, and D1102 together coordinate a divalent metal cation.

Belongs to the peptidase C19 family. PAN2 subfamily. As to quaternary structure, forms a heterotrimer with an asymmetric homodimer of the regulatory subunit PAN3 to form the poly(A)-nuclease (PAN) deadenylation complex. Requires a divalent metal cation as cofactor.

The protein localises to the cytoplasm. The catalysed reaction is Exonucleolytic cleavage of poly(A) to 5'-AMP.. With respect to regulation, positively regulated by the regulatory subunit PAN3. Catalytic subunit of the poly(A)-nuclease (PAN) deadenylation complex, one of two cytoplasmic mRNA deadenylases involved in mRNA turnover. PAN specifically shortens poly(A) tails of RNA and the activity is stimulated by poly(A)-binding protein PAB1. PAN deadenylation is followed by rapid degradation of the shortened mRNA tails by the CCR4-NOT complex. Deadenylated mRNAs are then degraded by two alternative mechanisms, namely exosome-mediated 3'-5' exonucleolytic degradation, or deadenylation-dependent mRNA decaping and subsequent 5'-3' exonucleolytic degradation by XRN1. May also be involved in post-transcriptional maturation of mRNA poly(A) tails. In Kluyveromyces lactis (strain ATCC 8585 / CBS 2359 / DSM 70799 / NBRC 1267 / NRRL Y-1140 / WM37) (Yeast), this protein is PAN2-PAN3 deadenylation complex catalytic subunit PAN2.